A 162-amino-acid chain; its full sequence is Crossover junction endodeoxyribonuclease RuvC (162 aa).

Active-site residues include aspartate 7, glutamate 67, and aspartate 140. Positions 7, 67, and 140 each coordinate Mg(2+).

The protein belongs to the RuvC family. Homodimer which binds Holliday junction (HJ) DNA. The HJ becomes 2-fold symmetrical on binding to RuvC with unstacked arms; it has a different conformation from HJ DNA in complex with RuvA. In the full resolvosome a probable DNA-RuvA(4)-RuvB(12)-RuvC(2) complex forms which resolves the HJ. It depends on Mg(2+) as a cofactor.

It is found in the cytoplasm. The catalysed reaction is Endonucleolytic cleavage at a junction such as a reciprocal single-stranded crossover between two homologous DNA duplexes (Holliday junction).. In terms of biological role, the RuvA-RuvB-RuvC complex processes Holliday junction (HJ) DNA during genetic recombination and DNA repair. Endonuclease that resolves HJ intermediates. Cleaves cruciform DNA by making single-stranded nicks across the HJ at symmetrical positions within the homologous arms, yielding a 5'-phosphate and a 3'-hydroxyl group; requires a central core of homology in the junction. The consensus cleavage sequence is 5'-(A/T)TT(C/G)-3'. Cleavage occurs on the 3'-side of the TT dinucleotide at the point of strand exchange. HJ branch migration catalyzed by RuvA-RuvB allows RuvC to scan DNA until it finds its consensus sequence, where it cleaves and resolves the cruciform DNA. This is Crossover junction endodeoxyribonuclease RuvC from Heliobacterium modesticaldum (strain ATCC 51547 / Ice1).